Here is a 354-residue protein sequence, read N- to C-terminus: UDP-glucose 4-epimerase GEPI42 (354 aa).

11 to 42 (TILVTGGAGFIGSHTVVQLLKQGFHVSIIDNL) is an NAD(+) binding site. Ser-137 is a binding site for substrate. Residue Tyr-161 is the Proton acceptor of the active site.

The protein belongs to the NAD(P)-dependent epimerase/dehydratase family. The cofactor is NAD(+).

It catalyses the reaction UDP-alpha-D-glucose = UDP-alpha-D-galactose. Its pathway is carbohydrate metabolism; galactose metabolism. The chain is UDP-glucose 4-epimerase GEPI42 from Cyamopsis tetragonoloba (Guar).